Here is a 1383-residue protein sequence, read N- to C-terminus: DNA-directed RNA polymerase subunit beta (1383 aa).

The protein belongs to the RNA polymerase beta chain family. The RNAP catalytic core consists of 2 alpha, 1 beta, 1 beta' and 1 omega subunit. When a sigma factor is associated with the core the holoenzyme is formed, which can initiate transcription.

The enzyme catalyses RNA(n) + a ribonucleoside 5'-triphosphate = RNA(n+1) + diphosphate. Its function is as follows. DNA-dependent RNA polymerase catalyzes the transcription of DNA into RNA using the four ribonucleoside triphosphates as substrates. This is DNA-directed RNA polymerase subunit beta from Xanthomonas oryzae pv. oryzae (strain MAFF 311018).